Reading from the N-terminus, the 199-residue chain is Tumor necrosis factor ligand superfamily member 4 (199 aa).

Topologically, residues 1–25 (MEGEGVQPPDENLENGSRPRFKWKK) are cytoplasmic. Residues 26–48 (VLRLVVSGIKAAGLLLCVVYVCL) form a helical; Signal-anchor for type II membrane protein membrane-spanning segment. Over 49–199 (QFSSSPAKDS…YSSTVNQVPL (151 aa)) the chain is Extracellular. A THD domain is found at 59 to 176 (PIQRLRAPVT…QINDGELIIV (118 aa)). 2 disulfides stabilise this stretch: Cys-70–Cys-163 and Cys-98–Cys-184. N-linked (GlcNAc...) asparagine glycans are attached at residues Asn-91 and Asn-157.

It belongs to the tumor necrosis factor family. As to quaternary structure, homotrimer. In terms of tissue distribution, detected in T-cell lines, but not in a macrophage cell line.

The protein resides in the membrane. Its function is as follows. Cytokine that binds to TNFRSF4. Co-stimulates T-cell proliferation and cytokine production. This Rattus norvegicus (Rat) protein is Tumor necrosis factor ligand superfamily member 4 (Tnfsf4).